The chain runs to 102 residues: MKKASQLSTTILTIFIVLAIGMMVKGTVGKQRLCIKVLTNASHVSKGASTCDSKLCTSLCEKISPQGVSFCKPIATTGQSKKGNPVCNCRYWCRSDGTPHTT.

A signal peptide spans 1–29 (MKKASQLSTTILTIFIVLAIGMMVKGTVG). Intrachain disulfides connect C34-C93, C51-C71, C56-C87, and C60-C89.

This sequence belongs to the DEFL family.

The protein localises to the secreted. The polypeptide is Putative defensin-like protein 152 (LCR11) (Arabidopsis thaliana (Mouse-ear cress)).